Consider the following 200-residue polypeptide: Recombination protein RecR (200 aa).

Residues 57-72 (CRQCRTLTEDELCPQC) form a C4-type zinc finger. The 96-residue stretch at 80–175 (TLLCVVEGPM…ITSRIAHGVP (96 aa)) folds into the Toprim domain.

It belongs to the RecR family.

Functionally, may play a role in DNA repair. It seems to be involved in an RecBC-independent recombinational process of DNA repair. It may act with RecF and RecO. This is Recombination protein RecR from Pseudomonas fluorescens (strain ATCC BAA-477 / NRRL B-23932 / Pf-5).